A 189-amino-acid polypeptide reads, in one-letter code: GTP cyclohydrolase 1 (189 aa).

Positions 78, 81, and 150 each coordinate Zn(2+).

Belongs to the GTP cyclohydrolase I family. As to quaternary structure, toroid-shaped homodecamer, composed of two pentamers of five dimers.

The catalysed reaction is GTP + H2O = 7,8-dihydroneopterin 3'-triphosphate + formate + H(+). It participates in cofactor biosynthesis; 7,8-dihydroneopterin triphosphate biosynthesis; 7,8-dihydroneopterin triphosphate from GTP: step 1/1. The chain is GTP cyclohydrolase 1 from Bacillus pumilus (strain SAFR-032).